Reading from the N-terminus, the 265-residue chain is Glutamate racemase (265 aa).

Substrate-binding positions include 9–10 (DS) and 41–42 (YG). The active-site Proton donor/acceptor is Cys72. Substrate is bound at residue 73–74 (NT). Cys183 (proton donor/acceptor) is an active-site residue. 184–185 (TH) contacts substrate.

It belongs to the aspartate/glutamate racemases family.

It catalyses the reaction L-glutamate = D-glutamate. Its pathway is cell wall biogenesis; peptidoglycan biosynthesis. Its function is as follows. Provides the (R)-glutamate required for cell wall biosynthesis. The polypeptide is Glutamate racemase (Lysinibacillus sphaericus (Bacillus sphaericus)).